Consider the following 148-residue polypeptide: MDRALSTFPGDDDETNERNINHREKTSGEHGHYEDKLLDLSEEEPNMIKIKNDIKKIINERYSNYISIDDDEISDILKDSFISNEEMQIKDFVLRLLVLEKLFQTSVKECNSLKNIIKRLENHIETIRKNMIVLTKKVDFQTGRSTTL.

A disordered region spans residues 1 to 34; the sequence is MDRALSTFPGDDDETNERNINHREKTSGEHGHYE. The segment covering 16-34 has biased composition (basic and acidic residues); sequence NERNINHREKTSGEHGHYE.

Belongs to the poxviruses fusion protein family. As to quaternary structure, homotrimer, covalently linked.

It localises to the virion membrane. The protein is Putative fusion protein of Sheeppox virus (strain KS-1) (SPPV).